A 352-amino-acid polypeptide reads, in one-letter code: uncharacterized protein (352 aa).

An N-terminal signal peptide occupies residues 1-22 (MAIYLDKLKMPIIIGLIVLIIA).

This sequence belongs to the bacterial solute-binding protein 1 family. WtpA subfamily.

This is an uncharacterized protein from Staphylothermus marinus (strain ATCC 43588 / DSM 3639 / JCM 9404 / F1).